A 274-amino-acid polypeptide reads, in one-letter code: MPKYCRAPNCSNTAGRLGADNRPVSFYKFPLKDGPRLQAWLQHMGCEHWVPSCHQHLCSEHFTPSCFQWRWGVRYLRPDAVPSIFSRGPPAKSQRRTRSTQKPVSPPPPLQKNTPLPQSPAIPVSGPVRLVVLGPTSGSPKTVATMLLTPLAPAPTPERSQPEVPAQQAQTGLGPVLGALQRRVRRLQRCQERHQAQLQALERLAQQLHGESLLARARRGLQRLTTAQTLGPEESQTFTIICGGPDIAMVLAQDPAPATVDAKPELLDTRIPSA.

Residues 1 to 85 (MPKYCRAPNC…LRPDAVPSIF (85 aa)) form a THAP-type zinc finger. A disordered region spans residues 83–121 (SIFSRGPPAKSQRRTRSTQKPVSPPPPLQKNTPLPQSPA).

The polypeptide is THAP domain-containing protein 8 (THAP8) (Homo sapiens (Human)).